We begin with the raw amino-acid sequence, 63 residues long: Overexpressed in colon carcinoma 1 protein homolog (63 aa).

Over residues methionine 1–serine 10 the composition is skewed to polar residues. The segment at methionine 1–asparagine 37 is disordered.

This sequence belongs to the OCC1 family.

The chain is Overexpressed in colon carcinoma 1 protein homolog from Rattus norvegicus (Rat).